We begin with the raw amino-acid sequence, 505 residues long: ATP synthase subunit alpha (505 aa).

170–177 (GDRQTGKS) lines the ATP pocket.

The protein belongs to the ATPase alpha/beta chains family. As to quaternary structure, F-type ATPases have 2 components, CF(1) - the catalytic core - and CF(0) - the membrane proton channel. CF(1) has five subunits: alpha(3), beta(3), gamma(1), delta(1), epsilon(1). CF(0) has four main subunits: a(1), b(1), b'(1) and c(9-12).

It localises to the cellular thylakoid membrane. It carries out the reaction ATP + H2O + 4 H(+)(in) = ADP + phosphate + 5 H(+)(out). Functionally, produces ATP from ADP in the presence of a proton gradient across the membrane. The alpha chain is a regulatory subunit. This is ATP synthase subunit alpha from Prochlorococcus marinus (strain AS9601).